The primary structure comprises 346 residues: Small ribosomal subunit biogenesis GTPase RsgA (346 aa).

Positions 1 to 25 (MAKRKLTQNQTRRIQSNNAKTLHRH) are disordered. A compositionally biased stretch (polar residues) spans 7-20 (TQNQTRRIQSNNAK). In terms of domain architecture, CP-type G spans 103 to 271 (ENEISRPDYY…LIDSPGIREF (169 aa)). GTP contacts are provided by residues 159-162 (NKVD) and 213-221 (GQSGVGKSS). Positions 295, 300, 302, and 308 each coordinate Zn(2+).

Belongs to the TRAFAC class YlqF/YawG GTPase family. RsgA subfamily. As to quaternary structure, monomer. Associates with 30S ribosomal subunit, binds 16S rRNA. The cofactor is Zn(2+).

It is found in the cytoplasm. Its function is as follows. One of several proteins that assist in the late maturation steps of the functional core of the 30S ribosomal subunit. Helps release RbfA from mature subunits. May play a role in the assembly of ribosomal proteins into the subunit. Circularly permuted GTPase that catalyzes slow GTP hydrolysis, GTPase activity is stimulated by the 30S ribosomal subunit. This is Small ribosomal subunit biogenesis GTPase RsgA from Haemophilus influenzae (strain ATCC 51907 / DSM 11121 / KW20 / Rd).